The primary structure comprises 263 residues: 4'-phosphopantetheinyl transferase pptA (263 aa).

This sequence belongs to the P-Pant transferase superfamily.

The enzyme catalyses apo-[ACP] + CoA = holo-[ACP] + adenosine 3',5'-bisphosphate + H(+). Its function is as follows. Transfers the 4'-phosphopantetheine moiety from coenzyme A to a Ser of an acyl-carrier-protein. Activates the peptidyl carrier protein (PCP) domains of surfactin synthas. The chain is 4'-phosphopantetheinyl transferase pptA (pptA) from Paxillus involutus (Naked brimcap).